We begin with the raw amino-acid sequence, 508 residues long: Photosystem II CP47 reaction center protein (508 aa).

6 consecutive transmembrane segments (helical) span residues 21–36, 101–115, 140–156, 203–218, 237–252, and 457–472; these read AVHL…WAGS, IVLS…IWHW, GIHL…FGAF, IAAG…FHLS, VLSS…AFVV, and TFAL…HGAR.

Belongs to the PsbB/PsbC family. PsbB subfamily. In terms of assembly, PSII is composed of 1 copy each of membrane proteins PsbA, PsbB, PsbC, PsbD, PsbE, PsbF, PsbH, PsbI, PsbJ, PsbK, PsbL, PsbM, PsbT, PsbX, PsbY, PsbZ, Psb30/Ycf12, at least 3 peripheral proteins of the oxygen-evolving complex and a large number of cofactors. It forms dimeric complexes. Requires Binds multiple chlorophylls. PSII binds additional chlorophylls, carotenoids and specific lipids. as cofactor.

Its subcellular location is the plastid. The protein localises to the chloroplast thylakoid membrane. Functionally, one of the components of the core complex of photosystem II (PSII). It binds chlorophyll and helps catalyze the primary light-induced photochemical processes of PSII. PSII is a light-driven water:plastoquinone oxidoreductase, using light energy to abstract electrons from H(2)O, generating O(2) and a proton gradient subsequently used for ATP formation. This Anthoceros angustus (Hornwort) protein is Photosystem II CP47 reaction center protein.